The primary structure comprises 475 residues: Protein FAM161A (475 aa).

Residues 53–107 form a disordered region; sequence ISDSSSSSASEKSCSHPALSVTSLSEPDLDGSSSLSTTTDEGLPDLEEKTPGESS. 2 stretches are compositionally biased toward low complexity: residues 54–64 and 82–93; these read SDSSSSSASEK and DGSSSLSTTTDE. A coiled-coil region spans residues 162–234; sequence VREQNRREKA…RERNRAALLA (73 aa). A required for interaction with CFAP418 region spans residues 255–434; that stretch reads KLRDLFRAKR…PTASSRGREQ (180 aa). The interval 314–337 is disordered; the sequence is RSACRRFRDPRSPAKPRGKHRRRC. The span at 327-337 shows a compositional bias: basic residues; that stretch reads AKPRGKHRRRC. Residue lysine 377 forms a Glycyl lysine isopeptide (Lys-Gly) (interchain with G-Cter in SUMO2) linkage. The interval 389–441 is disordered; sequence EEILRETRRPGRSPRRKSPGRSSNPKPRPHECSPPMPTASSRGREQAIRRSEK. Residues 398-407 show a composition bias toward basic residues; it reads PGRSPRRKSP. The segment covering 430–441 has biased composition (basic and acidic residues); that stretch reads RGREQAIRRSEK.

The protein belongs to the FAM161 family. Interacts (via central region) with CFAP418 (via N-terminus); the interaction is direct. Interacts (via C-terminus) with microtubules. Interacts with LCA5. Interacts with CEP290. Interacts with SDCCAG8. Interacts with FAM161B. Interacts with POC1B. Interacts with CEP78. Forms a microtubule-associated complex with POC5, CETN2 and POC1B. Interacts with CCDC15. In terms of tissue distribution, expressed in the retina.

It is found in the cytoplasm. The protein resides in the cytoskeleton. Its subcellular location is the cilium basal body. It localises to the cell projection. The protein localises to the cilium. It is found in the microtubule organizing center. The protein resides in the centrosome. Its subcellular location is the centriole. Its function is as follows. Involved in ciliogenesis. The polypeptide is Protein FAM161A (Mus musculus (Mouse)).